The chain runs to 167 residues: Protein-export protein SecB (167 aa).

This sequence belongs to the SecB family. As to quaternary structure, homotetramer, a dimer of dimers. One homotetramer interacts with 1 SecA dimer.

It localises to the cytoplasm. Functionally, one of the proteins required for the normal export of preproteins out of the cell cytoplasm. It is a molecular chaperone that binds to a subset of precursor proteins, maintaining them in a translocation-competent state. It also specifically binds to its receptor SecA. The chain is Protein-export protein SecB from Idiomarina loihiensis (strain ATCC BAA-735 / DSM 15497 / L2-TR).